A 1366-amino-acid chain; its full sequence is DNA-directed RNA polymerase subunit beta' (1366 aa).

Over residues 1–23 (MTSSKPKKSSRVRKTTKNSKKNH) the composition is skewed to basic residues. Positions 1–37 (MTSSKPKKSSRVRKTTKNSKKNHNTMMPLLPKTPPSF) are disordered. 4 residues coordinate Zn(2+): Cys-248, Cys-315, Cys-322, and Cys-325. Positions 1304–1366 (TAILDDPSDE…LQEEGLLSDG (63 aa)) are disordered. The span at 1354–1366 (LEGLQEEGLLSDG) shows a compositional bias: low complexity.

This sequence belongs to the RNA polymerase beta' chain family. RpoC2 subfamily. In cyanobacteria the RNAP catalytic core is composed of 2 alpha, 1 beta, 1 beta', 1 gamma and 1 omega subunit. When a sigma factor is associated with the core the holoenzyme is formed, which can initiate transcription. Zn(2+) is required as a cofactor.

The enzyme catalyses RNA(n) + a ribonucleoside 5'-triphosphate = RNA(n+1) + diphosphate. DNA-dependent RNA polymerase catalyzes the transcription of DNA into RNA using the four ribonucleoside triphosphates as substrates. The chain is DNA-directed RNA polymerase subunit beta' from Prochlorococcus marinus subsp. pastoris (strain CCMP1986 / NIES-2087 / MED4).